Reading from the N-terminus, the 937-residue chain is Isoleucine--tRNA ligase (937 aa).

Residues 58–68 carry the 'HIGH' region motif; it reads PYANGTLHLGH. Glutamate 561 is a binding site for L-isoleucyl-5'-AMP. A 'KMSKS' region motif is present at residues 602–606; sequence KMSKS. Lysine 605 contacts ATP. Zn(2+) contacts are provided by cysteine 900, cysteine 903, cysteine 920, and cysteine 923.

It belongs to the class-I aminoacyl-tRNA synthetase family. IleS type 1 subfamily. As to quaternary structure, monomer. The cofactor is Zn(2+).

The protein resides in the cytoplasm. The catalysed reaction is tRNA(Ile) + L-isoleucine + ATP = L-isoleucyl-tRNA(Ile) + AMP + diphosphate. In terms of biological role, catalyzes the attachment of isoleucine to tRNA(Ile). As IleRS can inadvertently accommodate and process structurally similar amino acids such as valine, to avoid such errors it has two additional distinct tRNA(Ile)-dependent editing activities. One activity is designated as 'pretransfer' editing and involves the hydrolysis of activated Val-AMP. The other activity is designated 'posttransfer' editing and involves deacylation of mischarged Val-tRNA(Ile). This Histophilus somni (strain 2336) (Haemophilus somnus) protein is Isoleucine--tRNA ligase.